Here is a 160-residue protein sequence, read N- to C-terminus: MLPFLFFSTLFSSIFTEAQKQYWVCNSSDASISYTYCDKMQYPISINVNPCIELKRSKGLLHIFYIPRRDLKQLYFNLYITVNTMNLPKRKEVICRGSDDDYSFCRALKGETVNTTISFSFKGIKFSKGKYKCVVEAISGSPEEMLFCLEFVILHQPNSN.

Residues 1-18 (MLPFLFFSTLFSSIFTEA) form the signal peptide. 3 disulfides stabilise this stretch: Cys-25/Cys-51, Cys-37/Cys-148, and Cys-95/Cys-105. Asn-26 is a glycosylation site (N-linked (GlcNAc...) asparagine). N-linked (GlcNAc...) asparagine glycosylation occurs at Asn-114. Residues 119–123 (FSFKG) form an interaction with lipopolysaccharide region.

As to quaternary structure, heterogeneous homomer formed from homodimers; disulfide-linked. Belongs to the lipopolysaccharide (LPS) receptor, a multi-protein complex containing at least CD14, LY96 and TLR4. Binds to the extracellular domains of TLR2 and TLR4. Ligand binding induces interaction with TLR4 and oligomerization of the complex. Post-translationally, N-glycosylated; high-mannose.

Its subcellular location is the secreted. The protein localises to the extracellular space. Its function is as follows. Binds bacterial lipopolysaccharide (LPS). Cooperates with TLR4 in the innate immune response to bacterial lipopolysaccharide (LPS), and with TLR2 in the response to cell wall components from Gram-positive and Gram-negative bacteria. Enhances TLR4-dependent activation of NF-kappa-B. Cells expressing both LY96 and TLR4, but not TLR4 alone, respond to LPS. In Homo sapiens (Human), this protein is Lymphocyte antigen 96 (LY96).